The sequence spans 302 residues: MKLFEDLQWRGLVKQYSSDSLIEKLNNGKLTFYIGTDPTADSLHLGHYSSFLIAKRLAKYGHQPIILIGGATALVGDPRGTSERDLAEQEKIFDNFEKLKNQIQKIFPYEIVNNYDWTKNIMAIDFLREFGKHITAGYMSNKELVKRQFATGISFTEFSYMLLQGMDFYHLFTTKGVTLQIAGSDQWGNMTTGIDLVRKKTGEEVFAMTMPLITDEEGKKFGKSEGNAIWISENKNTPEELHNFLLNVSDDIVISLLKKLTFLSRKDIEEIESRHKNGTGYAQGILADTVTFDIHGVSINKK.

Residue tyrosine 33 participates in L-tyrosine binding. The short motif at 38-47 (PTADSLHLGH) is the 'HIGH' region element. L-tyrosine-binding residues include tyrosine 160 and glutamine 164. Residues 220–224 (KFGKS) carry the 'KMSKS' region motif. Lysine 223 lines the ATP pocket.

Belongs to the class-I aminoacyl-tRNA synthetase family. TyrS type 1 subfamily. Homodimer.

Its subcellular location is the cytoplasm. It catalyses the reaction tRNA(Tyr) + L-tyrosine + ATP = L-tyrosyl-tRNA(Tyr) + AMP + diphosphate + H(+). In terms of biological role, catalyzes the attachment of tyrosine to tRNA(Tyr) in a two-step reaction: tyrosine is first activated by ATP to form Tyr-AMP and then transferred to the acceptor end of tRNA(Tyr). This chain is Tyrosine--tRNA ligase 2 (tyrS2), found in Streptococcus thermophilus (strain CNRZ 1066).